A 296-amino-acid polypeptide reads, in one-letter code: NAD kinase (296 aa).

Catalysis depends on D72, which acts as the Proton acceptor. Residues 72–73 (DG), 146–147 (ND), R157, K174, D176, 187–192 (TAYALS), and Q247 each bind NAD(+).

It belongs to the NAD kinase family. Requires a divalent metal cation as cofactor.

It is found in the cytoplasm. The catalysed reaction is NAD(+) + ATP = ADP + NADP(+) + H(+). In terms of biological role, involved in the regulation of the intracellular balance of NAD and NADP, and is a key enzyme in the biosynthesis of NADP. Catalyzes specifically the phosphorylation on 2'-hydroxyl of the adenosine moiety of NAD to yield NADP. The sequence is that of NAD kinase from Pseudomonas entomophila (strain L48).